The chain runs to 478 residues: tRNA modification GTPase MnmE (478 aa).

(6S)-5-formyl-5,6,7,8-tetrahydrofolate contacts are provided by R25, E82, and K135. A TrmE-type G domain is found at 231–400 (GIKVVIAGQP…LREQLLRVVG (170 aa)). N241 is a K(+) binding site. GTP-binding positions include 241–246 (NVGKSS), 260–266 (TPVAGTT), and 285–288 (DTAG). Mg(2+) is bound at residue S245. K(+) contacts are provided by T260, V262, and T265. T266 serves as a coordination point for Mg(2+). Residue K478 coordinates (6S)-5-formyl-5,6,7,8-tetrahydrofolate.

Belongs to the TRAFAC class TrmE-Era-EngA-EngB-Septin-like GTPase superfamily. TrmE GTPase family. In terms of assembly, homodimer. Heterotetramer of two MnmE and two MnmG subunits. K(+) serves as cofactor.

The protein localises to the cytoplasm. In terms of biological role, exhibits a very high intrinsic GTPase hydrolysis rate. Involved in the addition of a carboxymethylaminomethyl (cmnm) group at the wobble position (U34) of certain tRNAs, forming tRNA-cmnm(5)s(2)U34. This Polaromonas naphthalenivorans (strain CJ2) protein is tRNA modification GTPase MnmE.